Reading from the N-terminus, the 377-residue chain is Chaperone protein DnaJ (377 aa).

The region spanning 5 to 70 (DYYEVLGVSR…DKKAAYDQFG (66 aa)) is the J domain. The CR-type zinc finger occupies 133-211 (GLTKELRIPT…CHGDGRVEKS (79 aa)). Residues cysteine 146, cysteine 149, cysteine 163, cysteine 166, cysteine 185, cysteine 188, cysteine 199, and cysteine 202 each coordinate Zn(2+). 4 CXXCXGXG motif repeats span residues 146-153 (CDLCEGSG), 163-170 (CGTCHGQG), 185-192 (CPTCHGRG), and 199-206 (CSKCHGDG).

The protein belongs to the DnaJ family. In terms of assembly, homodimer. Zn(2+) is required as a cofactor.

It is found in the cytoplasm. Participates actively in the response to hyperosmotic and heat shock by preventing the aggregation of stress-denatured proteins and by disaggregating proteins, also in an autonomous, DnaK-independent fashion. Unfolded proteins bind initially to DnaJ; upon interaction with the DnaJ-bound protein, DnaK hydrolyzes its bound ATP, resulting in the formation of a stable complex. GrpE releases ADP from DnaK; ATP binding to DnaK triggers the release of the substrate protein, thus completing the reaction cycle. Several rounds of ATP-dependent interactions between DnaJ, DnaK and GrpE are required for fully efficient folding. Also involved, together with DnaK and GrpE, in the DNA replication of plasmids through activation of initiation proteins. The chain is Chaperone protein DnaJ from Shewanella baltica (strain OS195).